The sequence spans 90 residues: uncharacterized protein (90 aa).

A helical transmembrane segment spans residues 69–89; it reads LLYIFLGAMIVIIFLVIKNQL.

The protein belongs to the IIV-6 466R family.

It is found in the membrane. This is an uncharacterized protein from Invertebrate iridescent virus 6 (IIV-6).